We begin with the raw amino-acid sequence, 651 residues long: Intraflagellar transport protein 70A (651 aa).

TPR repeat units lie at residues 8–41 (DGEYTATVYKMIKEGRYGDAIHILSKEHQKHTKS), 42–75 (RAALSLLGYCYYHMQDFTNAAECYEQLTQLHPEV), 140–173 (PDYDVDLGCLLYKEGEFEEACKKFMSSMNVLGYQ), 175–207 (DLAYNIALCYYSLKQYASALKYIAEIIERGIRE), 379–410 (VTKQVQEARHNRDDESLKKYVQDYDEVLEKYI), 411–443 (PVLMAQAKIYWNRENYSMVEKIFHKSLEFCNEH), and 445–478 (TWKLNVAHVLFMQDNKYKEAIGFYEPIVKKHYEN). A coiled-coil region spans residues 494–521 (YIMTSQNEEAEELMRKIEKEEEQISYDD). A TPR 8 repeat occupies 530–563 (CIVNLVIGTLYCAKGNYDFGISRVIKSLEPYNKK).

It belongs to the TTC30/dfy-1/fleer family. Localizes to the cilia of many ciliated epithelial cell types including pronephric cells, olfactory placode, the brain ventricle and lateral line organs.

The protein resides in the cell projection. It is found in the cilium. Plays a role in anterograde intraflagellar transport (IFT), the process by which cilia precursors are transported from the base of the cilium to the site of their incorporation at the tip. Required for polyglutamylation of axonemal tubulin, which is a prerequisite for correct assembly of cilia and for normal cilia beat amplitude. Does not seem to be required for neuronal microtubule polyglutamylation. The sequence is that of Intraflagellar transport protein 70A (ift70a) from Danio rerio (Zebrafish).